The primary structure comprises 178 residues: PRA1 family protein 2 (178 aa).

The Cytoplasmic portion of the chain corresponds to 1–41 (MSEVRLPPLRALDDFVLGSARLAAPDPCDPQRWCHRVINNL). Residues 42–62 (LYYQTNYLLCFGIGLALAGYV) form a helical membrane-spanning segment. Residues 63-64 (RP) lie on the Extracellular side of the membrane. The chain crosses the membrane as a helical span at residues 65 to 85 (LHTLLSALVVAVALGVLVWAA). The Cytoplasmic segment spans residues 86 to 96 (ETRAAVRRCRR). Residues 97-119 (SHPAACLAAVLAVGLLVLWVAGG) form a helical membrane-spanning segment. The Extracellular segment spans residues 120-122 (ACT). The chain crosses the membrane as a helical span at residues 123–140 (FLFSIAGPVLLILVHASL). At 141-178 (RLRNLKNKIENKIESIGLKRTPMGLLLEALGQEQEAGS) the chain is on the cytoplasmic side.

This sequence belongs to the PRA1 family. As to quaternary structure, interacts with CCR5 and GDE1. As to expression, strong expression in the brain, small intestine, lung, spleen, and pancreas as well as in tumor tissues of the breast, colon, lung and ovary, with a weaker expression in normal tissues of the same patient. High expression in neuroblastic tumors. Strongly expressed in Purkinje cells and more moderately in cells of the molecular and the granular layers in the cerebellum. Detected in neuronal cells, but not in non-neuronal cells in the cerebral cortex, hippocampus, and lateral ventricles.

It localises to the endosome membrane. In terms of biological role, may be involved in ER/Golgi transport and vesicular traffic. Plays a proapoptotic role in cerulenin-induced neuroblastoma apoptosis. In Homo sapiens (Human), this protein is PRA1 family protein 2 (PRAF2).